A 504-amino-acid chain; its full sequence is MSQQQQGAEQAPDLNNELQTRREKLAALRENGIAFPNDFRRENISEDLHAKYDDKTQEELEALNIDVTVGGRMMTRRIMGKASFVTLQDMGGRIQLYVARDDLPEGIYNEQFKKWDLGDILGARGKLFKTKTGELSIHCTELRLLTKALRPLPDKFHGLADQETRYRQRYLDLIANEESRKTFQIRSQVLLALRSFMVSKGFMEVETPMMQVIPGGAAARPFITHHNALDIDMYLRIAPELYLKRLVVGGFERVFEINRNFRNEGVSPRHNPEFTMMELYMAYADYKDLIVLIEELFRTLTQNILGNTLVKYGEQEFDFGKPFAQMTMKEAICKYRPETNIADLDDMDKVVAIAESLGIEVEKGWGLGRVQCEIFEETAESHLIQPTFITEYPAEVSPLARRNDANPFITDRFEFFIGGREIGNGFSELNDAEDQAERFAEQVRQKDEGDDEAMFYDEDYVTALEHGMPPTAGLGIGIDRMIMLLTDSHTIRDVILFPAMRPQK.

Mg(2+)-binding residues include Glu-414 and Glu-421.

It belongs to the class-II aminoacyl-tRNA synthetase family. Homodimer. The cofactor is Mg(2+).

It is found in the cytoplasm. The enzyme catalyses tRNA(Lys) + L-lysine + ATP = L-lysyl-tRNA(Lys) + AMP + diphosphate. The chain is Lysine--tRNA ligase from Photorhabdus laumondii subsp. laumondii (strain DSM 15139 / CIP 105565 / TT01) (Photorhabdus luminescens subsp. laumondii).